Consider the following 88-residue polypeptide: UPF0250 protein SO_1163 (88 aa).

This sequence belongs to the UPF0250 family.

In Shewanella oneidensis (strain ATCC 700550 / JCM 31522 / CIP 106686 / LMG 19005 / NCIMB 14063 / MR-1), this protein is UPF0250 protein SO_1163.